The following is a 273-amino-acid chain: SET domain-containing protein 9 (273 aa).

An SET domain is found at 96-269 (FSVAQATSSL…QGEELFSNYY (174 aa)). Tyrosine 268 is an S-adenosyl-L-methionine binding site.

Belongs to the class V-like SAM-binding methyltransferase superfamily.

This chain is SET domain-containing protein 9 (SETD9), found in Pongo abelii (Sumatran orangutan).